A 422-amino-acid polypeptide reads, in one-letter code: tRNA hydroxylation protein P (422 aa).

Positions Met1 to Ala58 are cleaved as a signal peptide.

The protein belongs to the peptidase U32 family.

Involved in prephenate-dependent formation of 5-hydroxyuridine (ho5U) modification at position 34 in tRNAs, the first step in 5-carboxymethoxyuridine (cmo5U) biosynthesis. In Helicobacter pylori (strain J99 / ATCC 700824) (Campylobacter pylori J99), this protein is tRNA hydroxylation protein P.